Here is a 198-residue protein sequence, read N- to C-terminus: Protoplast secreted protein 2 (198 aa).

The signal sequence occupies residues 1–21; that stretch reads MPRVAIIIYTLYGHVAATAEA. A Flavodoxin-like domain is found at 22 to 191; it reads EKKGIEAAGG…QVHEIQGKTF (170 aa).

This sequence belongs to the WrbA family.

The protein resides in the secreted. In Saccharomyces cerevisiae (strain ATCC 204508 / S288c) (Baker's yeast), this protein is Protoplast secreted protein 2 (PST2).